Here is a 439-residue protein sequence, read N- to C-terminus: Methylenetetrahydrofolate--tRNA-(uracil-5-)-methyltransferase TrmFO (439 aa).

9–14 (GAGLAG) provides a ligand contact to FAD.

It belongs to the MnmG family. TrmFO subfamily. It depends on FAD as a cofactor.

The protein localises to the cytoplasm. The catalysed reaction is uridine(54) in tRNA + (6R)-5,10-methylene-5,6,7,8-tetrahydrofolate + NADH + H(+) = 5-methyluridine(54) in tRNA + (6S)-5,6,7,8-tetrahydrofolate + NAD(+). The enzyme catalyses uridine(54) in tRNA + (6R)-5,10-methylene-5,6,7,8-tetrahydrofolate + NADPH + H(+) = 5-methyluridine(54) in tRNA + (6S)-5,6,7,8-tetrahydrofolate + NADP(+). In terms of biological role, catalyzes the folate-dependent formation of 5-methyl-uridine at position 54 (M-5-U54) in all tRNAs. In Lactobacillus delbrueckii subsp. bulgaricus (strain ATCC BAA-365 / Lb-18), this protein is Methylenetetrahydrofolate--tRNA-(uracil-5-)-methyltransferase TrmFO.